The sequence spans 1014 residues: Regulator of telomere elongation helicase 1 homolog (1014 aa).

One can recognise a Helicase ATP-binding domain in the interval 7 to 324; that stretch reads AGIPVHFPFE…KEMLLELEKA (318 aa). Residue 42-49 participates in ATP binding; sequence SPTGTGKT. Positions 147, 165, 174, and 210 each coordinate [4Fe-4S] cluster. A DEAH box motif is present at residues 253–256; that stretch reads DEAH. Thr-873 carries the phosphothreonine modification. A disordered region spans residues 891-917; that stretch reads TDMVKTEPGTSNSCSYGNTSSSGSDSR. A compositionally biased stretch (low complexity) spans 899–917; the sequence is GTSNSCSYGNTSSSGSDSR.

It belongs to the helicase family. RAD3/XPD subfamily.

The protein resides in the nucleus. It carries out the reaction ATP + H2O = ADP + phosphate + H(+). Its function is as follows. A probable ATP-dependent DNA helicase implicated in DNA repair and the maintenance of genomic stability. Acts as an anti-recombinase to counteract toxic recombination and limit crossover during meiosis. Regulates meiotic recombination and crossover homeostasis by physically dissociating strand invasion events and thereby promotes noncrossover repair by meiotic synthesis dependent strand annealing (SDSA) as well as disassembly of D loop recombination intermediates. The polypeptide is Regulator of telomere elongation helicase 1 homolog (Drosophila mojavensis (Fruit fly)).